The primary structure comprises 491 residues: 2-aminomuconic 6-semialdehyde dehydrogenase (491 aa).

Catalysis depends on residues E252 and C286.

This sequence belongs to the aldehyde dehydrogenase family. As to quaternary structure, homotrimer.

The enzyme catalyses 2-aminomuconate 6-semialdehyde + NAD(+) + H2O = (2Z,4E)-2-aminomuconate + NADH + 2 H(+). Strongly inhibited by Ag(+) and Hg(+), and comnpletely inhibited by p-chloromercuribenzoic acid. In terms of biological role, involved in the modified meta-cleavage pathway for 2-aminophenol catabolism. The enzyme is also active toward 2-hydroxymuconic 6-semialdehyde, acetaldehyde, propionaldehyde, and butyraldehyde. The protein is 2-aminomuconic 6-semialdehyde dehydrogenase (amnC) of Pseudomonas sp.